A 427-amino-acid chain; its full sequence is Glutamyl-tRNA reductase (427 aa).

Substrate contacts are provided by residues 49-52 (TCNR), S109, 114-116 (EGQ), and Q120. C50 functions as the Nucleophile in the catalytic mechanism. 188–193 (GAGKMA) contacts NADP(+).

It belongs to the glutamyl-tRNA reductase family. Homodimer.

It catalyses the reaction (S)-4-amino-5-oxopentanoate + tRNA(Glu) + NADP(+) = L-glutamyl-tRNA(Glu) + NADPH + H(+). The protein operates within porphyrin-containing compound metabolism; protoporphyrin-IX biosynthesis; 5-aminolevulinate from L-glutamyl-tRNA(Glu): step 1/2. It functions in the pathway porphyrin-containing compound metabolism; chlorophyll biosynthesis. With respect to regulation, feedback inhibition by heme. Functionally, catalyzes the NADPH-dependent reduction of glutamyl-tRNA(Glu) to glutamate 1-semialdehyde (GSA). This chain is Glutamyl-tRNA reductase, found in Synechocystis sp. (strain ATCC 27184 / PCC 6803 / Kazusa).